Here is a 644-residue protein sequence, read N- to C-terminus: Exoribonuclease 2 (644 aa).

The RNB domain occupies 189 to 516 (REDLTALDFV…NHRLLKAVIK (328 aa)). Residues 561–643 (DTRFAAEIVD…ETRSIIARPV (83 aa)) form the S1 motif domain.

The protein belongs to the RNR ribonuclease family. RNase II subfamily.

Its subcellular location is the cytoplasm. It carries out the reaction Exonucleolytic cleavage in the 3'- to 5'-direction to yield nucleoside 5'-phosphates.. Its function is as follows. Involved in mRNA degradation. Hydrolyzes single-stranded polyribonucleotides processively in the 3' to 5' direction. The protein is Exoribonuclease 2 of Escherichia coli O127:H6 (strain E2348/69 / EPEC).